Here is a 228-residue protein sequence, read N- to C-terminus: Casparian strip membrane protein 2 (228 aa).

The Cytoplasmic segment spans residues 1 to 65; it reads MSTSDAAATV…FRRADRGSRC (65 aa). The helical transmembrane segment at 66 to 86 threads the bilayer; it reads VALLDLVLRVAAFGPALAAAI. The Extracellular portion of the chain corresponds to 87 to 113; sequence ATGTSDETLSVFTQFFQFHARFDDFPA. A helical membrane pass occupies residues 114-134; sequence LLFFMVANAIAAGYLVLSLPF. The Cytoplasmic segment spans residues 135–149; the sequence is SAVVVLRPQAIGLRH. The helical transmembrane segment at 150-170 threads the bilayer; it reads LLLICDLIIAALLTAAAAAAA. Topologically, residues 171 to 201 are extracellular; the sequence is AIVDLAHSGNQRANWVPICMQFHGFCQRTSG. Residues 202–222 traverse the membrane as a helical segment; the sequence is AVVASFLAVLVLLFLVILAAF. Topologically, residues 223–228 are cytoplasmic; sequence TIRKRC.

Belongs to the Casparian strip membrane proteins (CASP) family. As to quaternary structure, homodimer and heterodimers.

It localises to the cell membrane. Regulates membrane-cell wall junctions and localized cell wall deposition. Required for establishment of the Casparian strip membrane domain (CSD) and the subsequent formation of Casparian strips, a cell wall modification of the root endodermis that determines an apoplastic barrier between the intraorganismal apoplasm and the extraorganismal apoplasm and prevents lateral diffusion. This Zea mays (Maize) protein is Casparian strip membrane protein 2.